Consider the following 165-residue polypeptide: Large ribosomal subunit protein uL10 (165 aa).

Belongs to the universal ribosomal protein uL10 family. In terms of assembly, part of the ribosomal stalk of the 50S ribosomal subunit. The N-terminus interacts with L11 and the large rRNA to form the base of the stalk. The C-terminus forms an elongated spine to which L12 dimers bind in a sequential fashion forming a multimeric L10(L12)X complex.

Functionally, forms part of the ribosomal stalk, playing a central role in the interaction of the ribosome with GTP-bound translation factors. This chain is Large ribosomal subunit protein uL10, found in Shewanella piezotolerans (strain WP3 / JCM 13877).